The primary structure comprises 410 residues: Aspartic proteinase Asp1 (410 aa).

The signal sequence occupies residues 1-23; the sequence is MTARLALLASLLLLLQLVPPSSA. Positions 24 to 46 are cleaved as a propeptide — removed in mature form; sequence VVLELHGNVYPIGHFFITMNIGD. Residues 38–392 enclose the Peptidase A1 domain; the sequence is FFITMNIGDP…DSERSLLGWV (355 aa). Residues Asp56 and Asp257 contribute to the active site.

It belongs to the peptidase A1 family.

This Oryza sativa subsp. japonica (Rice) protein is Aspartic proteinase Asp1 (ASP1).